The sequence spans 303 residues: Monoglyceride lipase (303 aa).

Thr10 is modified (phosphothreonine). The residue at position 58 (Tyr58) is a 3'-nitrotyrosine. Ser122 serves as the catalytic Nucleophile. Ser189 is modified (phosphoserine). Catalysis depends on charge relay system residues Asp239 and His269.

Belongs to the AB hydrolase superfamily. Monoacylglycerol lipase family. Homodimer. Ubiquitous.

It is found in the cytoplasm. The protein resides in the cytosol. Its subcellular location is the membrane. The enzyme catalyses Hydrolyzes glycerol monoesters of long-chain fatty acids.. It catalyses the reaction a 1-acylglycerol + H2O = glycerol + a fatty acid + H(+). The catalysed reaction is a 2-acylglycerol + H2O = glycerol + a fatty acid + H(+). It carries out the reaction 2-(5Z,8Z,11Z,14Z-eicosatetraenoyl)-glycerol + H2O = glycerol + (5Z,8Z,11Z,14Z)-eicosatetraenoate + H(+). The enzyme catalyses 1-octanoylglycerol + H2O = octanoate + glycerol + H(+). It catalyses the reaction 1-decanoylglycerol + H2O = decanoate + glycerol + H(+). The catalysed reaction is 1-dodecanoylglycerol + H2O = dodecanoate + glycerol + H(+). It carries out the reaction 1-tetradecanoylglycerol + H2O = tetradecanoate + glycerol + H(+). The enzyme catalyses 2-hexadecanoylglycerol + H2O = glycerol + hexadecanoate + H(+). It catalyses the reaction 1-(9Z-octadecenoyl)-glycerol + H2O = glycerol + (9Z)-octadecenoate + H(+). The catalysed reaction is 2-(9Z-octadecenoyl)-glycerol + H2O = glycerol + (9Z)-octadecenoate + H(+). It carries out the reaction 2-(9Z,12Z-octadecadienoyl)-glycerol + H2O = (9Z,12Z)-octadecadienoate + glycerol + H(+). The enzyme catalyses 1-(5Z,8Z,11Z,14Z-eicosatetraenoyl)-glycerol + H2O = glycerol + (5Z,8Z,11Z,14Z)-eicosatetraenoate + H(+). It catalyses the reaction 1-(9Z,12Z-octadecadienoyl)-glycerol + H2O = (9Z,12Z)-octadecadienoate + glycerol + H(+). The catalysed reaction is 1-hexadecanoylglycerol + H2O = glycerol + hexadecanoate + H(+). It carries out the reaction 1-octadecanoylglycerol + H2O = octadecanoate + glycerol + H(+). The enzyme catalyses prostaglandin E2 1-glyceryl ester + H2O = prostaglandin E2 + glycerol + H(+). It catalyses the reaction prostaglandin D2-1-glycerol ester + H2O = prostaglandin D2 + glycerol + H(+). The catalysed reaction is 2-glyceryl-15-deoxy-Delta(12,14)-prostaglandin J2 + H2O = 15-deoxy-Delta(12,14)-prostaglandin J2 + glycerol + H(+). It carries out the reaction prostaglandin F2alpha 1-glyceryl ester + H2O = prostaglandin F2alpha + glycerol + H(+). It functions in the pathway glycerolipid metabolism; triacylglycerol degradation. In terms of biological role, converts monoacylglycerides to free fatty acids and glycerol. Hydrolyzes the endocannabinoid 2-arachidonoylglycerol, and thereby contributes to the regulation of endocannabinoid signaling, nociperception and perception of pain. Regulates the levels of fatty acids that serve as signaling molecules and promote cancer cell migration, invasion and tumor growth. The protein is Monoglyceride lipase of Mus musculus (Mouse).